Reading from the N-terminus, the 588-residue chain is Thioredoxin domain-containing protein 3 (588 aa).

Residues 2-119 (ASKKREVQLQ…VINLIDEERK (118 aa)) form the Thioredoxin domain. A disulfide bridge links Cys-39 with Cys-42. NDK stretches follow at residues 157–257 (IAII…DQPE), 315–455 (LEKT…STLG), and 456–588 (LIKP…PEEN). A disordered region spans residues 230–261 (GSKHNPPSEETEPQTDTEPNERSEDQPEVEAQ).

It in the C-terminal section; belongs to the NDK family. Monomer. As to expression, testis-specific. Expressed only in primary spermatocytes and round spermatids.

It localises to the cytoplasm. Functionally, probably required during the final stages of sperm tail maturation in the testis and/or epididymis, where extensive disulfide bonding of fibrous sheath (FS) proteins occurs. In vitro, it has neither nucleoside diphosphate kinase (NDPK) activity nor reducing activity on disulfide bonds. Exhibits a 3'-5' exonuclease activity with a preference for single-stranded DNA, suggesting roles in DNA proofreading and repair. This is Thioredoxin domain-containing protein 3 from Homo sapiens (Human).